The primary structure comprises 804 residues: Zinc finger protein YGR067C (804 aa).

2 C2H2-type zinc fingers span residues 8–30 (YICSFCLKPFSRSEHKIRHERSH) and 36–59 (FQCQVCKHSFVRRDLLQRHIRTVH). Residues 782 to 796 (QEFSASSTDNKQSKN) show a composition bias toward polar residues. The disordered stretch occupies residues 782–804 (QEFSASSTDNKQSKNIEIFSQIK).

Its subcellular location is the nucleus. This is Zinc finger protein YGR067C from Saccharomyces cerevisiae (strain ATCC 204508 / S288c) (Baker's yeast).